The chain runs to 132 residues: Ribosome-binding factor A (132 aa).

This sequence belongs to the RbfA family. Monomer. Binds 30S ribosomal subunits, but not 50S ribosomal subunits or 70S ribosomes.

The protein resides in the cytoplasm. One of several proteins that assist in the late maturation steps of the functional core of the 30S ribosomal subunit. Associates with free 30S ribosomal subunits (but not with 30S subunits that are part of 70S ribosomes or polysomes). Required for efficient processing of 16S rRNA. May interact with the 5'-terminal helix region of 16S rRNA. The polypeptide is Ribosome-binding factor A (Burkholderia lata (strain ATCC 17760 / DSM 23089 / LMG 22485 / NCIMB 9086 / R18194 / 383)).